The primary structure comprises 339 residues: Ornithine utilization regulator (339 aa).

The region spanning 241 to 338 (TRVRRLLLAR…GKLPSDYREA (98 aa)) is the HTH araC/xylS-type domain. 2 consecutive DNA-binding regions (H-T-H motif) follow at residues 258–279 (EQAARELHTSGRSLRRHLSSLG) and 305–328 (LYEIALLLGFNDSSNFRRAFRKWT).

Probably activates the ArgJ gene that encodes ornithine acetyltransferase. Binds to its own promoter-operator region. Probably binds ornithine. This is Ornithine utilization regulator (oruR) from Pseudomonas aeruginosa (strain ATCC 15692 / DSM 22644 / CIP 104116 / JCM 14847 / LMG 12228 / 1C / PRS 101 / PAO1).